Here is a 327-residue protein sequence, read N- to C-terminus: Ferrochelatase 2 (327 aa).

Fe cation-binding residues include H201 and E282.

It belongs to the ferrochelatase family.

The protein resides in the cytoplasm. It catalyses the reaction heme b + 2 H(+) = protoporphyrin IX + Fe(2+). It functions in the pathway porphyrin-containing compound metabolism; protoheme biosynthesis; protoheme from protoporphyrin-IX: step 1/1. Catalyzes the ferrous insertion into protoporphyrin IX. This chain is Ferrochelatase 2, found in Shewanella oneidensis (strain ATCC 700550 / JCM 31522 / CIP 106686 / LMG 19005 / NCIMB 14063 / MR-1).